A 164-amino-acid chain; its full sequence is Siroheme decarboxylase alpha subunit (164 aa).

Belongs to the Ahb/Nir family. Forms a heterodimer composed of AhbA and AhbB.

It carries out the reaction siroheme + 2 H(+) = 12,18-didecarboxysiroheme + 2 CO2. It participates in porphyrin-containing compound metabolism; protoheme biosynthesis. Functionally, involved in siroheme-dependent heme b biosynthesis. Catalyzes the decarboxylation of siroheme into didecarboxysiroheme. The protein is Siroheme decarboxylase alpha subunit of Oleidesulfovibrio alaskensis (strain ATCC BAA-1058 / DSM 17464 / G20) (Desulfovibrio alaskensis).